The primary structure comprises 104 residues: MAAKIKKNDQVIVLIGKDKGKIGIVRKVIAKSKVIVEGVNIVKKHTKPSPSQNKKGGIVEQESSINISNIAILNPTTKKSDRIGFRVKNGKKVRFFKSNNTICN.

It belongs to the universal ribosomal protein uL24 family. In terms of assembly, part of the 50S ribosomal subunit.

Functionally, one of two assembly initiator proteins, it binds directly to the 5'-end of the 23S rRNA, where it nucleates assembly of the 50S subunit. Its function is as follows. One of the proteins that surrounds the polypeptide exit tunnel on the outside of the subunit. This is Large ribosomal subunit protein uL24 from Buchnera aphidicola subsp. Baizongia pistaciae (strain Bp).